Consider the following 104-residue polypeptide: Vegetative-specific protein H7 (104 aa).

An HTH cro/C1-type domain is found at 43–97; sequence IQRARNALKMTQKELAFKINERPGVINEYESGSAIPSQAVLSKLEKALNVKLRGK. Positions 54–73 form a DNA-binding region, H-T-H motif; the sequence is QKELAFKINERPGVINEYES.

The protein is Vegetative-specific protein H7 (cinD-1) of Dictyostelium discoideum (Social amoeba).